The primary structure comprises 362 residues: Probable dual-specificity RNA methyltransferase RlmN (362 aa).

The Proton acceptor role is filled by Glu91. Residues 97 to 329 (QHYGLSVCVT…KKNGVNCVVR (233 aa)) enclose the Radical SAM core domain. The cysteines at positions 104 and 340 are disulfide-linked. The [4Fe-4S] cluster site is built by Cys111, Cys115, and Cys118. Residues 163 to 164 (GE), Ser195, 218 to 220 (SLH), and Asn296 contribute to the S-adenosyl-L-methionine site. The active-site S-methylcysteine intermediate is the Cys340.

Belongs to the radical SAM superfamily. RlmN family. It depends on [4Fe-4S] cluster as a cofactor.

It localises to the cytoplasm. The enzyme catalyses adenosine(2503) in 23S rRNA + 2 reduced [2Fe-2S]-[ferredoxin] + 2 S-adenosyl-L-methionine = 2-methyladenosine(2503) in 23S rRNA + 5'-deoxyadenosine + L-methionine + 2 oxidized [2Fe-2S]-[ferredoxin] + S-adenosyl-L-homocysteine. It catalyses the reaction adenosine(37) in tRNA + 2 reduced [2Fe-2S]-[ferredoxin] + 2 S-adenosyl-L-methionine = 2-methyladenosine(37) in tRNA + 5'-deoxyadenosine + L-methionine + 2 oxidized [2Fe-2S]-[ferredoxin] + S-adenosyl-L-homocysteine. Functionally, specifically methylates position 2 of adenine 2503 in 23S rRNA and position 2 of adenine 37 in tRNAs. This Streptococcus sanguinis (strain SK36) protein is Probable dual-specificity RNA methyltransferase RlmN.